Consider the following 127-residue polypeptide: DNA-directed RNA polymerase subunit omega (127 aa).

Belongs to the RNA polymerase subunit omega family. In terms of assembly, the RNAP catalytic core consists of 2 alpha, 1 beta, 1 beta' and 1 omega subunit. When a sigma factor is associated with the core the holoenzyme is formed, which can initiate transcription.

The enzyme catalyses RNA(n) + a ribonucleoside 5'-triphosphate = RNA(n+1) + diphosphate. Functionally, promotes RNA polymerase assembly. Latches the N- and C-terminal regions of the beta' subunit thereby facilitating its interaction with the beta and alpha subunits. This chain is DNA-directed RNA polymerase subunit omega (rpoZ), found in Rickettsia prowazekii (strain Madrid E).